A 416-amino-acid polypeptide reads, in one-letter code: Counting factor 60 (416 aa).

The signal sequence occupies residues 1–22 (MIKKSALITLFLVSLILGVSLS). N-linked (GlcNAc...) asparagine glycans are attached at residues Asn110, Asn218, Asn231, Asn318, and Asn411.

It belongs to the histidine acid phosphatase family. Component of the counting factor (CF) complex, which includes cf60, cf50, cf45-1 and ctnA.

The protein localises to the secreted. Functionally, cell-counting factor that limits the maximum size of the multicellular structure. Does not possess acid phosphatase activity. Cells with decreased levels of this protein form large groups while cells overexpressing this protein form small groups. This is Counting factor 60 (cf60) from Dictyostelium discoideum (Social amoeba).